The following is a 469-amino-acid chain: MIHVYNTLSREKEAFHAITPGKVNMYVCGPTVYNYIHIGNARSAIAFDVIRRYLEYSGYVVNYVSNFTDVDDKIIQRAREEGVDEMTIADKYAQAFDEDTIPLNIKPATTRSRATAVIPDIIAFVEDLIHKGYAYESAGDVYFRAKKFKGYGILAHQDLAEMEANAAGRLDDQELTRKEDPIDFAVWKASHSSDEISWVSPWGKGRPGWHIECSVMAQKYLADTIDIHGGGIDLAFPHHTNEIAQSEARTGQTFVNYWLHNGFVNVNDEKMSKSLGNFTTVHDMLAHYDDPMVIRYLLATTQYRRPINYAPDTLEQARAELERIRTAYRNVFFRISTAKTGHDDSVDYAIAEHISHFREAMDDDFNTQNAIASIFELVTIANNYASRDEIKLDTATRLTHAIADLMNVFGVNGLSEHLTLSAEAQALLDKRVQARAVRDFNLSDQLRDQLSDMGIIVEDTTQGQRWHHA.

Residue Cys28 participates in Zn(2+) binding. Residues 30–40 (PTVYNYIHIGN) carry the 'HIGH' region motif. Residues Cys213, His238, and Glu242 each coordinate Zn(2+). The short motif at 270-274 (KMSKS) is the 'KMSKS' region element. Residue Lys273 coordinates ATP.

The protein belongs to the class-I aminoacyl-tRNA synthetase family. In terms of assembly, monomer. It depends on Zn(2+) as a cofactor.

The protein resides in the cytoplasm. The enzyme catalyses tRNA(Cys) + L-cysteine + ATP = L-cysteinyl-tRNA(Cys) + AMP + diphosphate. The sequence is that of Cysteine--tRNA ligase from Leuconostoc citreum (strain KM20).